The following is a 418-amino-acid chain: Tyrosine--tRNA ligase (418 aa).

Y34 lines the L-tyrosine pocket. A 'HIGH' region motif is present at residues 39 to 48; the sequence is PTADSLHLGH. L-tyrosine is bound by residues Y169 and Q173. Positions 229–233 match the 'KMSKS' region motif; that stretch reads KFGKS. Position 232 (K232) interacts with ATP. The region spanning 352–418 is the S4 RNA-binding domain; that stretch reads LNIVEILVSS…GKKKYAVLTY (67 aa).

The protein belongs to the class-I aminoacyl-tRNA synthetase family. TyrS type 1 subfamily. Homodimer.

It is found in the cytoplasm. The enzyme catalyses tRNA(Tyr) + L-tyrosine + ATP = L-tyrosyl-tRNA(Tyr) + AMP + diphosphate + H(+). In terms of biological role, catalyzes the attachment of tyrosine to tRNA(Tyr) in a two-step reaction: tyrosine is first activated by ATP to form Tyr-AMP and then transferred to the acceptor end of tRNA(Tyr). This chain is Tyrosine--tRNA ligase, found in Streptococcus uberis (strain ATCC BAA-854 / 0140J).